The primary structure comprises 552 residues: Urocanate hydratase (552 aa).

Residues 49–50 (GG), Q127, 173–175 (GMG), D193, 239–240 (NA), 260–264 (QTSAH), 270–271 (YI), and Y319 each bind NAD(+). C407 is an active-site residue. G489 is an NAD(+) binding site.

It belongs to the urocanase family. The cofactor is NAD(+).

It localises to the cytoplasm. It carries out the reaction 4-imidazolone-5-propanoate = trans-urocanate + H2O. Its pathway is amino-acid degradation; L-histidine degradation into L-glutamate; N-formimidoyl-L-glutamate from L-histidine: step 2/3. Its function is as follows. Catalyzes the conversion of urocanate to 4-imidazolone-5-propionate. This Bacillus thuringiensis (strain Al Hakam) protein is Urocanate hydratase.